The primary structure comprises 508 residues: Photosystem II CP47 reaction center protein (508 aa).

6 helical membrane-spanning segments follow: residues 21–36, 101–115, 140–156, 203–218, 237–252, and 457–472; these read AVHIMHTALVSGWAGS, IVFSGLCFLAAIWHW, GIHLFLAGVACFGFGAF, IAAGTLGILAGLFHLS, VLSSSIAAVFFAAFVV, and TFALLFFFGHIWHGAR.

This sequence belongs to the PsbB/PsbC family. PsbB subfamily. In terms of assembly, PSII is composed of 1 copy each of membrane proteins PsbA, PsbB, PsbC, PsbD, PsbE, PsbF, PsbH, PsbI, PsbJ, PsbK, PsbL, PsbM, PsbT, PsbX, PsbY, PsbZ, Psb30/Ycf12, at least 3 peripheral proteins of the oxygen-evolving complex and a large number of cofactors. It forms dimeric complexes. Binds multiple chlorophylls. PSII binds additional chlorophylls, carotenoids and specific lipids. serves as cofactor.

Its subcellular location is the plastid. The protein localises to the chloroplast thylakoid membrane. Functionally, one of the components of the core complex of photosystem II (PSII). It binds chlorophyll and helps catalyze the primary light-induced photochemical processes of PSII. PSII is a light-driven water:plastoquinone oxidoreductase, using light energy to abstract electrons from H(2)O, generating O(2) and a proton gradient subsequently used for ATP formation. This is Photosystem II CP47 reaction center protein from Secale cereale (Rye).